A 626-amino-acid chain; its full sequence is Chaperone protein HtpG (626 aa).

Residues 1–329 (MSEETLSFQA…SSDLPLNVSR (329 aa)) form an a; substrate-binding region. A b region spans residues 330-549 (EMLQDDPRLR…EGAMSLHLQK (220 aa)). The interval 550–626 (LLRQANQGSE…LTEVMGKGLI (77 aa)) is c.

Belongs to the heat shock protein 90 family. Homodimer.

The protein localises to the cytoplasm. In terms of biological role, molecular chaperone. Has ATPase activity. This is Chaperone protein HtpG from Rhodospirillum rubrum (strain ATCC 11170 / ATH 1.1.1 / DSM 467 / LMG 4362 / NCIMB 8255 / S1).